Here is a 488-residue protein sequence, read N- to C-terminus: Calcium uniporter protein, mitochondrial (488 aa).

Residues 1–74 constitute a mitochondrion transit peptide; that stretch reads MRALVSRTPI…RSFQLSASSR (74 aa). The segment at 65 to 117 is disordered; the sequence is RSFQLSASSRDKRGPQSAEPDPLERLEVKKVQQQHENEKDDSGRDTKSGGKVA. Residues 75–339 lie on the Mitochondrial matrix side of the membrane; it reads DKRGPQSAEP…ECDALAHRGA (265 aa). Basic and acidic residues predominate over residues 86-112; that stretch reads PLERLEVKKVQQQHENEKDDSGRDTKS. Residues 340–361 form a helical membrane-spanning segment; that stretch reads QRVALGGFGILAFWWYIVYKLT. The Mitochondrial intermembrane segment spans residues 362–370; the sequence is FETDLGWDT. The Selectivity filter signature appears at 368 to 376; the sequence is WDTMEPVTY. The chain crosses the membrane as a helical span at residues 371–391; that stretch reads MEPVTYLVSLSTLMGGYLWFL. E372 contacts Ca(2+). Over 392–488 the chain is Mitochondrial matrix; the sequence is YHNREISYRS…ERPKDDRDDD (97 aa). Positions 464–488 are disordered; that stretch reads ALKKERRLKNGSQKEERPKDDRDDD. Basic and acidic residues predominate over residues 475–488; that stretch reads SQKEERPKDDRDDD.

This sequence belongs to the MCU (TC 1.A.77) family. Homotetramer, assembles in a dimer or dimers configuration with two interfaces.

It localises to the mitochondrion inner membrane. The catalysed reaction is Ca(2+)(in) = Ca(2+)(out). Its activity is regulated as follows. Inhibited by ruthenium red or its derivative Ru360. Functionally, highly selective calcium channel localized to the inner mitochondrial membrane, which mediates calcium uptake into the mitochondrial matrix. Mitochondrial calcium homeostasis plays key roles in cellular physiology and regulates ATP production, cytoplasmic calcium signals and activation of cell death pathways. Sufficient to operate as a pore-forming channel without the need of calcium-sensor or auxiliary subunit. This is Calcium uniporter protein, mitochondrial from Neosartorya fischeri (strain ATCC 1020 / DSM 3700 / CBS 544.65 / FGSC A1164 / JCM 1740 / NRRL 181 / WB 181) (Aspergillus fischerianus).